The following is a 1297-amino-acid chain: Insulin receptor-related protein (1297 aa).

Residues 1 to 26 form the signal peptide; sequence MAVPSLWPWGACLPVIFLSLGFGLDT. Asparagine 47 is a glycosylation site (N-linked (GlcNAc...) asparagine). 9 cysteine pairs are disulfide-bonded: cysteine 214/cysteine 222, cysteine 216/cysteine 228, cysteine 229/cysteine 237, cysteine 233/cysteine 246, cysteine 249/cysteine 258, cysteine 262/cysteine 274, cysteine 280/cysteine 300, cysteine 304/cysteine 317, and cysteine 320/cysteine 324. A glycan (N-linked (GlcNAc...) asparagine) is linked at asparagine 311. N-linked (GlcNAc...) asparagine glycosylation is found at asparagine 411, asparagine 492, asparagine 528, asparagine 616, and asparagine 634. 2 consecutive Fibronectin type-III domains span residues 483-603 and 607-707; these read QTRT…TLPA and VPQD…AQEA. Cysteine 657 and cysteine 864 are joined by a disulfide. Disordered regions lie at residues 666-687 and 732-758; these read SNNDPRFDGEDGDPEAEMESDC and SINKSPQRDSGRHRRAAGPLRLGGNSS. Positions 675-685 are enriched in acidic residues; that stretch reads EDGDPEAEMES. Residues 747-921 are Extracellular-facing; sequence AAGPLRLGGN…PEEEDAGGLH (175 aa). Asparagine 756, asparagine 885, and asparagine 898 each carry an N-linked (GlcNAc...) asparagine glycan. The region spanning 818–913 is the Fibronectin type-III 3 domain; it reads IPGKVAWEAS…SVAFYILGPE (96 aa). Residues 922–943 traverse the membrane as a helical segment; it reads VLLTATPVGLTLLIVLAALGFF. The Cytoplasmic portion of the chain corresponds to 944-1297; that stretch reads YGKKRNRTLY…CSPQNGGPGH (354 aa). The Protein kinase domain occupies 979–1254; it reads ISIIRELGQG…SIQEELRPSF (276 aa). ATP contacts are provided by residues 985-993 and lysine 1013; that span reads LGQGSFGMV. Catalysis depends on aspartate 1115, which acts as the Proton acceptor. A phosphotyrosine; by autocatalysis mark is found at tyrosine 1145 and tyrosine 1146. The disordered stretch occupies residues 1267-1297; the sequence is GARGSLPTTDAEPDSSPTPRDCSPQNGGPGH. Over residues 1281-1297 the composition is skewed to polar residues; sequence SSPTPRDCSPQNGGPGH.

This sequence belongs to the protein kinase superfamily. Tyr protein kinase family. Insulin receptor subfamily. As to quaternary structure, probable tetramer of 2 alpha and 2 beta chains linked by disulfide bonds. The alpha chains contribute to the formation of the ligand-binding domain, while the beta chains carry the kinase domain. Post-translationally, autophosphorylated on tyrosine residues between pH 7.9 and pH 10.5.

The protein resides in the membrane. It carries out the reaction L-tyrosyl-[protein] + ATP = O-phospho-L-tyrosyl-[protein] + ADP + H(+). Receptor with tyrosine-protein kinase activity. Functions as a pH sensing receptor which is activated by increased extracellular pH. Activates an intracellular signaling pathway that involves IRS1 and AKT1/PKB. This is Insulin receptor-related protein (INSRR) from Homo sapiens (Human).